A 318-amino-acid chain; its full sequence is MEVLSPPLRDVDLTGPDGSLCNFATADDFYDDPCFDSPDLRFFEDLDPRLVHVGALLKPEEHSHFPAAAHPAPGAREDEHVRAPSGHHQAGRCLLWACKACKRKTTNADRRKAATMRERRRLSKVNEAFETLKRCTSSNPNQRLPKVEILRNAIRYIEGLQALLRDQDAAPPGAAAAFYAPGPLPPGRSGEHYSGDSDASSPRSNCSDGMMDYSGPPSGARRRNCYDRTYYSEAPNEPRPGKSAAVSSLDCLSSIVERISTESPAAPALLLADAPPESSPGPQEAAGSEVERGTPAPSPDTAPQGLAGANPNPIYQVL.

A Peptide (Met-Gly) (interchain with G-Cter in ubiquitin) cross-link involves residue M1. Position 104 is an N6-methyllysine; by EHMT2 (K104). The 52-residue stretch at 109–160 (DRRKAATMRERRRLSKVNEAFETLKRCTSSNPNQRLPKVEILRNAIRYIEGL) folds into the bHLH domain. 2 disordered regions span residues 174–224 (AAAA…RRRN) and 266–318 (APAL…YQVL). Residues 197-207 (SDASSPRSNCS) show a composition bias toward polar residues. Residues 266–276 (APALLLADAPP) are compositionally biased toward low complexity.

Efficient DNA binding requires dimerization with another bHLH protein. Seems to form active heterodimers with ITF-2. Interacts with SUV39H1. Interacts with DDX5. Interacts with CHD2. Interacts with TSC22D3. Interacts with SETD3. Interacts with P-TEFB complex; promotes the transcriptional activity of MYOD1 through its CDK9-mediated phosphorylation. Interacts with CSRP3. Interacts with NUPR1. Phosphorylated by CDK9. This phosphorylation promotes its function in muscle differentiation. Post-translationally, acetylated by a complex containing EP300 and PCAF. The acetylation is essential to activate target genes. Conversely, its deacetylation by SIRT1 inhibits its function. In terms of processing, ubiquitinated on the N-terminus; which is required for proteasomal degradation. Methylation at Lys-104 by EHMT2/G9a inhibits myogenic activity.

It is found in the nucleus. In terms of biological role, acts as a transcriptional activator that promotes transcription of muscle-specific target genes and plays a role in muscle differentiation. Together with MYF5 and MYOG, co-occupies muscle-specific gene promoter core region during myogenesis. Induces fibroblasts to differentiate into myoblasts. Interacts with and is inhibited by the twist protein. This interaction probably involves the basic domains of both proteins. The polypeptide is Myoblast determination protein 1 (MYOD1) (Bos taurus (Bovine)).